The sequence spans 275 residues: Ribosomal RNA small subunit methyltransferase A (275 aa).

6 residues coordinate S-adenosyl-L-methionine: N19, L21, G46, E71, D94, and N117.

Belongs to the class I-like SAM-binding methyltransferase superfamily. rRNA adenine N(6)-methyltransferase family. RsmA subfamily.

The protein localises to the cytoplasm. The catalysed reaction is adenosine(1518)/adenosine(1519) in 16S rRNA + 4 S-adenosyl-L-methionine = N(6)-dimethyladenosine(1518)/N(6)-dimethyladenosine(1519) in 16S rRNA + 4 S-adenosyl-L-homocysteine + 4 H(+). Its function is as follows. Specifically dimethylates two adjacent adenosines (A1518 and A1519) in the loop of a conserved hairpin near the 3'-end of 16S rRNA in the 30S particle. May play a critical role in biogenesis of 30S subunits. The chain is Ribosomal RNA small subunit methyltransferase A from Burkholderia mallei (strain NCTC 10247).